A 59-amino-acid chain; its full sequence is Large ribosomal subunit protein bL33 (59 aa).

Belongs to the bacterial ribosomal protein bL33 family.

The polypeptide is Large ribosomal subunit protein bL33 (Neorickettsia sennetsu (strain ATCC VR-367 / Miyayama) (Ehrlichia sennetsu)).